Here is a 327-residue protein sequence, read N- to C-terminus: Phosphate acyltransferase (327 aa).

The protein belongs to the PlsX family. In terms of assembly, homodimer. Probably interacts with PlsY.

Its subcellular location is the cytoplasm. It carries out the reaction a fatty acyl-[ACP] + phosphate = an acyl phosphate + holo-[ACP]. Its pathway is lipid metabolism; phospholipid metabolism. Its function is as follows. Catalyzes the reversible formation of acyl-phosphate (acyl-PO(4)) from acyl-[acyl-carrier-protein] (acyl-ACP). This enzyme utilizes acyl-ACP as fatty acyl donor, but not acyl-CoA. In Thermotoga maritima (strain ATCC 43589 / DSM 3109 / JCM 10099 / NBRC 100826 / MSB8), this protein is Phosphate acyltransferase.